The primary structure comprises 328 residues: Methionyl-tRNA formyltransferase (328 aa).

121–124 (SLLP) provides a ligand contact to (6S)-5,6,7,8-tetrahydrofolate.

This sequence belongs to the Fmt family.

It catalyses the reaction L-methionyl-tRNA(fMet) + (6R)-10-formyltetrahydrofolate = N-formyl-L-methionyl-tRNA(fMet) + (6S)-5,6,7,8-tetrahydrofolate + H(+). In terms of biological role, attaches a formyl group to the free amino group of methionyl-tRNA(fMet). The formyl group appears to play a dual role in the initiator identity of N-formylmethionyl-tRNA by promoting its recognition by IF2 and preventing the misappropriation of this tRNA by the elongation apparatus. This Burkholderia thailandensis (strain ATCC 700388 / DSM 13276 / CCUG 48851 / CIP 106301 / E264) protein is Methionyl-tRNA formyltransferase.